Here is a 155-residue protein sequence, read N- to C-terminus: uncharacterized protein (155 aa).

A signal peptide spans 1–23; that stretch reads MTILSLSRFMLAGVLLASFNASA.

To E.coli YfjT.

This is an uncharacterized protein from Escherichia coli (strain K12).